The chain runs to 306 residues: Pantothenate kinase (306 aa).

91–98 (GSVAVGKS) is a binding site for ATP.

It belongs to the prokaryotic pantothenate kinase family.

The protein localises to the cytoplasm. The catalysed reaction is (R)-pantothenate + ATP = (R)-4'-phosphopantothenate + ADP + H(+). The protein operates within cofactor biosynthesis; coenzyme A biosynthesis; CoA from (R)-pantothenate: step 1/5. The chain is Pantothenate kinase from Streptococcus thermophilus (strain ATCC BAA-491 / LMD-9).